A 301-amino-acid chain; its full sequence is Heterogeneous nuclear ribonucleoprotein D-like (301 aa).

The interval Met1–Asp29 is disordered. 2 RRM domains span residues Gly30–Glu112 and Lys115–Glu194. 2 disordered regions span residues Glu194 to Gln230 and Gly269 to Tyr301. Over residues Gly212–Gln224 the composition is skewed to gly residues.

The protein localises to the nucleus. Its subcellular location is the cytoplasm. In terms of biological role, acts as a transcriptional regulator. Binds DNA and RNA. The sequence is that of Heterogeneous nuclear ribonucleoprotein D-like (HNRNPDL) from Gallus gallus (Chicken).